Here is a 327-residue protein sequence, read N- to C-terminus: Protein MRG2 (327 aa).

The interval 1–40 is disordered; that stretch reads MGSPNAAAETDLTTDDFIGDTRRDSGSDTETNTDCDGEDL. In terms of domain architecture, Tudor-knot spans 52–101; sequence FEEGERVLAKHSDCFYEAKVLKVEFKDNEWKYFVHYIGWNKSWDEWIRLD. The segment at 133 to 156 is disordered; the sequence is SKMKPRSPNVARGRKRKQDSVDTE. The region spanning 162-327 is the MRG domain; sequence SDNLLSFNIP…AVEEMEKKEG (166 aa).

In terms of assembly, interacts with HAM1 and HAM2. Interacts (via MRG domain) with CO. Component of the NuA4 histone acetyltransferase complex. In terms of tissue distribution, ubiquitous. Mainly expressed in the vasculature of cotyledons and leaves, and in roots and inflorescences.

The protein localises to the nucleus. Chromatin remodeling factor. Acts as a 'reader' protein by binding to H3K4me3 and H3K36me3 to control histone H4 acetylation. Increases the transcriptional levels of the flowering time genes FLC and FT. Binds the chromatin at the FT promoter upon interaction with CO. The protein is Protein MRG2 of Arabidopsis thaliana (Mouse-ear cress).